The chain runs to 20 residues: Collagenolytic protease 36 kDa C (20 aa).

The 20-residue stretch at 1–20 folds into the Peptidase S1 domain; the sequence is IVGGSEATSGQFPYQXSFQD. Residues 1–20 are disordered; that stretch reads IVGGSEATSGQFPYQXSFQD.

This sequence belongs to the peptidase S1 family.

It carries out the reaction Hydrolysis of proteins, with broad specificity for peptide bonds. Native collagen is cleaved about 75% of the length of the molecule from the N-terminus. Low activity on small molecule substrates of both trypsin and chymotrypsin.. In terms of biological role, this enzyme is a serine protease capable of degrading the native triple helix of collagen. The protein is Collagenolytic protease 36 kDa C of Paralithodes camtschaticus (Red king crab).